A 227-amino-acid chain; its full sequence is Cleavage and polyadenylation specificity factor subunit 5 (227 aa).

In terms of domain architecture, Nudix hydrolase spans 76-201; sequence MRRTVEGVLI…KLVAAPLFEL (126 aa). Positions 102 to 104 are interaction with RNA; sequence TFF. Residues 109–130 carry the Nudix box motif; it reads GELNPGEDEVEGLKRLMTEILG.

Belongs to the Nudix hydrolase family. CPSF5 subfamily. In terms of assembly, homodimer (via N- and C-terminus); binds RNA as homodimer. Component of the cleavage factor Im (CFIm) complex.

The protein localises to the nucleus. It localises to the cytoplasm. Its function is as follows. Component of the cleavage factor Im (CFIm) complex that functions as an activator of the pre-mRNA 3'-end cleavage and polyadenylation processing required for the maturation of pre-mRNA into functional mRNAs. CFIm contributes to the recruitment of multiprotein complexes on specific sequences on the pre-mRNA 3'-end, so called cleavage and polyadenylation signals (pA signals). Most pre-mRNAs contain multiple pA signals, resulting in alternative cleavage and polyadenylation (APA) producing mRNAs with variable 3'-end formation. The CFIm complex acts as a key regulator of cleavage and polyadenylation site choice during APA through its binding to 5'-UGUA-3' elements localized in the 3'-untranslated region (UTR) for a huge number of pre-mRNAs. Binds to 5'-UGUA-3' elements localized upstream of pA signals that act as enhancers of pre-mRNA 3'-end processing. The homodimer mediates simultaneous sequence-specific recognition of two 5'-UGUA-3' elements within the pre-mRNA. Plays a role in somatic cell fate transitions and pluripotency by regulating widespread changes in gene expression through an APA-dependent function. Binds to chromatin. Binds to, but does not hydrolyze mono- and di-adenosine nucleotides. The chain is Cleavage and polyadenylation specificity factor subunit 5 from Xenopus laevis (African clawed frog).